Consider the following 250-residue polypeptide: Adenosylcobinamide-GDP ribazoletransferase (250 aa).

6 helical membrane passes run 33–53, 63–83, 109–129, 137–157, 180–200, and 203–223; these read IASYFPIVGIVIGGILSLFYI, IVMTFIVAFSYVLTGAMHIDG, LGTNGVLALVFMVVLKILFLT, LTALLITPIIGRLSIVFSMMI, FAIAFVISIATSYFILPLAVF, and ILTISLFVTYIVSKYISLRIG.

It belongs to the CobS family. It depends on Mg(2+) as a cofactor.

It is found in the cell membrane. The enzyme catalyses alpha-ribazole + adenosylcob(III)inamide-GDP = adenosylcob(III)alamin + GMP + H(+). It catalyses the reaction alpha-ribazole 5'-phosphate + adenosylcob(III)inamide-GDP = adenosylcob(III)alamin 5'-phosphate + GMP + H(+). The protein operates within cofactor biosynthesis; adenosylcobalamin biosynthesis; adenosylcobalamin from cob(II)yrinate a,c-diamide: step 7/7. In terms of biological role, joins adenosylcobinamide-GDP and alpha-ribazole to generate adenosylcobalamin (Ado-cobalamin). Also synthesizes adenosylcobalamin 5'-phosphate from adenosylcobinamide-GDP and alpha-ribazole 5'-phosphate. This chain is Adenosylcobinamide-GDP ribazoletransferase, found in Thermoanaerobacter sp. (strain X514).